The primary structure comprises 1279 residues: Sterol regulatory element-binding protein cleavage-activating protein (1279 aa).

Residues 1 to 18 (MTLTERLREKISRAFYNH) lie on the Cytoplasmic side of the membrane. The helical transmembrane segment at 19 to 39 (GLLCASYPIPIILFTGFCILA) threads the bilayer. The Lumenal portion of the chain corresponds to 40–279 (CCYPLLKLPL…SLVHVHFKEE (240 aa)). A loop-1 region spans residues 46–284 (KLPLPGTGPV…HFKEEIGVAE (239 aa)). Residues 60–80 (PVKDYSPPPVDSDRKQGEPTE) form a disordered region. Residue asparagine 263 is glycosylated (N-linked (GlcNAc...) asparagine). The helical transmembrane segment at 280 to 300 (IGVAELIPLVTTYIILFAYIY) threads the bilayer. The 159-residue stretch at 284-442 (ELIPLVTTYI…MLFFTTVLSI (159 aa)) folds into the SSD domain. The Cytoplasmic segment spans residues 301–312 (FSTRKIDMVKSK). Residues 313–333 (WGLALAAVVTVLSSLLMSVGL) form a helical membrane-spanning segment. Over 334–344 (CTLFGLTPTLN) the chain is Lumenal. The helical transmembrane segment at 345-365 (GGEIFPYLVVVIGLENVLVLT) threads the bilayer. The Cytoplasmic portion of the chain corresponds to 366–401 (KSVVSTPVDLEVKLRIAQGLSSESWSIMKNMATELG). The chain crosses the membrane as a helical span at residues 402 to 422 (IILIGYFTLVPAIQEFCLFAV). Residue valine 423 is a topological domain, lumenal. The chain crosses the membrane as a helical span at residues 424–444 (GLVSDFFLQMLFFTTVLSIDI). The Cytoplasmic portion of the chain corresponds to 445–518 (RRMELADLNK…FLARTRLAQR (74 aa)). The ER export signal motif lies at 447-452 (MELADL). Glycyl lysine isopeptide (Lys-Gly) (interchain with G-Cter in ubiquitin) cross-links involve residues lysine 454 and lysine 466. A helical transmembrane segment spans residues 519–539 (LIMAGTVVWIGILVYTDPAGL). The segment at 535 to 710 (DPAGLRNYLA…QAHGDVTLYK (176 aa)) is loop-7. The Lumenal portion of the chain corresponds to 540–709 (RNYLAAQVTE…VQAHGDVTLY (170 aa)). Residues 579–615 (IFPPDAPKLPENQTSPGESPERGGPAEVVHDSPVPEV) are disordered. N-linked (GlcNAc...) asparagine glycans are attached at residues asparagine 590 and asparagine 641. The tract at residues 668-696 (EGRHPQDGRSAWPPPGPIPAGHWEAGPKG) is disordered. The chain crosses the membrane as a helical span at residues 710 to 730 (KVAALGLATGIVLVLLLLCLY). Residues 731 to 1279 (RVLCPRNYGQ…YVPSVLEKLD (549 aa)) lie on the Cytoplasmic side of the membrane. The segment at 731–1279 (RVLCPRNYGQ…YVPSVLEKLD (549 aa)) is interaction with SREBF2. The WD 1 repeat unit spans residues 771–811 (VLRGHLMDIECLASDGMLLVSCCLAGHVCVWDAQTGDCLTR). Positions 811-904 (RIPRPGRQRR…PRHRAVCGRS (94 aa)) are disordered. Residues serine 822, serine 838, and serine 851 each carry the phosphoserine modification. A compositionally biased stretch (polar residues) spans 877–891 (IDTNFSAQPRSSQPT). Serine 907 and serine 937 each carry phosphoserine. A disordered region spans residues 931-962 (PALRPPSPGPVLSQAPEDEGGSPEKGSPSLAW). WD repeat units follow at residues 952–1002 (SPEK…LCCS) and 1005–1042 (EVSS…ALSP). Arginine 1051 is subject to Omega-N-methylarginine. WD repeat units lie at residues 1077-1114 (AHQK…CLFT), 1117-1155 (GHSG…RVSH), 1158-1195 (AHRG…KFYS), and 1197-1235 (QQDL…LLQT).

The protein belongs to the WD repeat SCAP family. In terms of assembly, membrane region forms a homotetramer. Component of the SCAP-SREBP complex (composed of SCAP and SREBF1/SREBP1 or SREBF2/SREBP2); interacts with SREBF1/SREBP1 or SREBF2/SREBP2 through its C-terminal cytoplasmic domain. Forms a ternary complex with INSIG1 or INSIG2 through its transmembrane domains at high sterol concentrations. Interacts with PAQR3; the interaction anchors the SCAP-SREBP complex to the Golgi apparatus in low cholesterol conditions. Interacts with the SEC23-SEC24 complex in a SAR1-GTP-dependent manner through an ER export signal in its third cytoplasmic loop. Interacts with RNF139; the interaction inhibits the interaction of SCAP with SEC24B and hampering the ER to Golgi transport of the SCAP-SREBP complex. Interacts with SPRING1. Ubiquitinated at Lys-454 and Lys-466. RNF145 triggers ubiquitination of SCAP, likely inhibiting SCAP-SREBP complex transport to the Golgi apparatus and the subsequent processing/maturation of SREBF2/SREBP2.

Its subcellular location is the endoplasmic reticulum membrane. The protein resides in the golgi apparatus membrane. It localises to the cytoplasmic vesicle. It is found in the COPII-coated vesicle membrane. Its function is as follows. Escort protein required for cholesterol as well as lipid homeostasis. Regulates export of the SCAP-SREBP complex from the endoplasmic reticulum to the Golgi upon low cholesterol, thereby regulating the processing of sterol regulatory element-binding proteins (SREBPs) SREBF1/SREBP1 and SREBF2/SREBP2. At high sterol concentrations, formation of a ternary complex with INSIG (INSIG1 or INSIG2) leads to mask the ER export signal in SCAP, promoting retention of the complex in the endoplasmic reticulum. Low sterol concentrations trigger release of INSIG, a conformational change in the SSD domain of SCAP, unmasking of the ER export signal, promoting recruitment into COPII-coated vesicles and transport of the SCAP-SREBP to the Golgi: in the Golgi, SREBPs are then processed, releasing the transcription factor fragment of SREBPs from the membrane, its import into the nucleus and up-regulation of LDLR, INSIG1 and the mevalonate pathway. Binds cholesterol via its SSD domain. This is Sterol regulatory element-binding protein cleavage-activating protein from Homo sapiens (Human).